A 994-amino-acid chain; its full sequence is Glutamate [NMDA] receptor subunit 1 (994 aa).

The signal sequence occupies residues 1–23 (MAADGFVYRWLLFGTTIVLLAEA). The Extracellular portion of the chain corresponds to 24-570 (AQRHTASDNP…TLVSFLQPFS (547 aa)). N-linked (GlcNAc...) asparagine glycosylation is found at asparagine 255, asparagine 311, asparagine 342, asparagine 394, asparagine 451, asparagine 478, and asparagine 498. Glycine contacts are provided by residues 527-529 (PLT) and arginine 534. Residues 571–591 (NTLWILVMVSVHVVALVLYLL) traverse the membrane as a helical segment. Residues 592 to 648 (DRFSPFGRFKLSHSDSNEEKALNLSSAVWFAWGVLLNSGIGEGTPRSFSARVLGMVW) are Cytoplasmic-facing. The chain crosses the membrane as a helical span at residues 649 to 669 (AGFAMIIVASYTANLAAFLVL). The Extracellular segment spans residues 670–828 (ERPKTKLSGI…KTPNTLGLKN (159 aa)). The N-linked (GlcNAc...) asparagine glycan is linked to asparagine 690. Serine 700 and aspartate 744 together coordinate glycine. The helical transmembrane segment at 829–849 (MAGVFILVGVGIAGGVGLIII) threads the bilayer. Residues 850–994 (EVIYKKHQVK…YTSDVSHLVV (145 aa)) are Cytoplasmic-facing. The disordered stretch occupies residues 971–994 (RPQQNMLPPRYSPGYTSDVSHLVV). Residues 984 to 994 (GYTSDVSHLVV) show a composition bias toward polar residues.

The protein belongs to the glutamate-gated ion channel (TC 1.A.10.1) family. As to quaternary structure, forms a heteromeric NMDA channel with Nmdar2.

The protein resides in the cell membrane. It localises to the postsynaptic cell membrane. The protein localises to the postsynaptic density. Its function is as follows. NMDA receptor subtype of glutamate-gated ion channels with high calcium permeability and voltage-dependent sensitivity to magnesium. Mediated by glycine. This protein plays a key role in synaptic plasticity, synaptogenesis, excitotoxicity, memory acquisition and learning. It mediates neuronal functions in glutamate neurotransmission. Is involved in the cell surface targeting of NMDA receptors. Plays a role in associative learning and in long-term memory consolidation. The sequence is that of Glutamate [NMDA] receptor subunit 1 from Drosophila ananassae (Fruit fly).